We begin with the raw amino-acid sequence, 619 residues long: Dihydroxy-acid dehydratase (619 aa).

Asp-81 lines the Mg(2+) pocket. Position 122 (Cys-122) interacts with [2Fe-2S] cluster. Mg(2+) is bound by residues Asp-123 and Lys-124. N6-carboxylysine is present on Lys-124. Cys-195 provides a ligand contact to [2Fe-2S] cluster. Glu-494 provides a ligand contact to Mg(2+). The Proton acceptor role is filled by Ser-520.

It belongs to the IlvD/Edd family. Homodimer. Requires [2Fe-2S] cluster as cofactor. It depends on Mg(2+) as a cofactor.

The catalysed reaction is (2R)-2,3-dihydroxy-3-methylbutanoate = 3-methyl-2-oxobutanoate + H2O. It carries out the reaction (2R,3R)-2,3-dihydroxy-3-methylpentanoate = (S)-3-methyl-2-oxopentanoate + H2O. It functions in the pathway amino-acid biosynthesis; L-isoleucine biosynthesis; L-isoleucine from 2-oxobutanoate: step 3/4. Its pathway is amino-acid biosynthesis; L-valine biosynthesis; L-valine from pyruvate: step 3/4. Its function is as follows. Functions in the biosynthesis of branched-chain amino acids. Catalyzes the dehydration of (2R,3R)-2,3-dihydroxy-3-methylpentanoate (2,3-dihydroxy-3-methylvalerate) into 2-oxo-3-methylpentanoate (2-oxo-3-methylvalerate) and of (2R)-2,3-dihydroxy-3-methylbutanoate (2,3-dihydroxyisovalerate) into 2-oxo-3-methylbutanoate (2-oxoisovalerate), the penultimate precursor to L-isoleucine and L-valine, respectively. The polypeptide is Dihydroxy-acid dehydratase (Shewanella denitrificans (strain OS217 / ATCC BAA-1090 / DSM 15013)).